The chain runs to 157 residues: Cytochrome P450 monooxygenase atG (157 aa).

Cys97 contributes to the heme binding site.

The protein belongs to the cytochrome P450 family. Requires heme as cofactor.

It participates in secondary metabolite biosynthesis. In terms of biological role, cytochrome P450 monooxygenase; part of the gene cluster that mediates the biosynthesis of terreic acid, a quinone epoxide inhibitor of Bruton's tyrosine kinase (BTK). The first step of the pathway is the synthesis of 6-methylsalicylic acid (6-MSA) by the 6-methylsalicylic acid synthase atX. In the biosynthesis of 6-MSA, atX utilizes one acetyl-CoA and three malonyl-CoAs as its substrates and catalyzes a series of programmed reactions including Claisen condensation, reduction, aldol cyclization, and the hydrolytic cleavage that yields 6-MSA. The 6-methylsalicylate 1-monooxygenase atA then catalyzes the decarboxylative hydroxylation of 6-MSA to 3-methylcatechol. The next step is the conversion of 3-methylcatechol to 3-methyl-1,2,4-benzenetriol by cytochrome P450 monooxygenase atE, which is enhanced by cytochrome P450 monooxygenase atG. Then, the epoxidase atD catalyzes the epoxidation and hydroxyl oxidation of 3-methyl-1,2,4-benzenetriol to terremutin. Lastly, GMC oxidoreductase atC oxidizes terremutin to terreic acid. This Aspergillus terreus (strain NIH 2624 / FGSC A1156) protein is Cytochrome P450 monooxygenase atG.